Reading from the N-terminus, the 705-residue chain is Polyribonucleotide nucleotidyltransferase (705 aa).

Aspartate 487 and aspartate 493 together coordinate Mg(2+). One can recognise a KH domain in the interval 554–613 (PKILTMSINPDKIRDVIGPSGKQINKIIEDTGVKIDIEQDGTIFISSTDESMNQKAKKII). The S1 motif domain occupies 623-691 (GQLYLGKVKR…KQGRVNLSRK (69 aa)).

It belongs to the polyribonucleotide nucleotidyltransferase family. The cofactor is Mg(2+).

The protein resides in the cytoplasm. It carries out the reaction RNA(n+1) + phosphate = RNA(n) + a ribonucleoside 5'-diphosphate. Functionally, involved in mRNA degradation. Catalyzes the phosphorolysis of single-stranded polyribonucleotides processively in the 3'- to 5'-direction. The sequence is that of Polyribonucleotide nucleotidyltransferase from Bacillus licheniformis (strain ATCC 14580 / DSM 13 / JCM 2505 / CCUG 7422 / NBRC 12200 / NCIMB 9375 / NCTC 10341 / NRRL NRS-1264 / Gibson 46).